Consider the following 395-residue polypeptide: MTLRRLRKLQQKEEAAATPDPAARTPDSEVAPAAPVPTPGPPAAAATPGPPADELYAALEDYHPAELYRALAVSGGTLPRRKGSGFRWKNLSQSPEQQRKVLTLEKEDNQTFGFEIQTYGLHHREEQRVEMVTFVCRVHESSPAQLAGLTPGDTIASVNGLNVEGIRHREIVDIIKASGNVLRLETLYGTSIRKAELEARLQYLKQTLYEKWGEYRSLMVQEQRLVHGLVVKDPSIYDTLESVRSCLYGAGLLPGSLPFGPLLAVPGRPRGGARRARGDADDAVYHTCFFGDSEPPALPPPPPPARAFGPGPAETPAVGPGPGPRAALSRSASVRCAGPGGGGGGGAPGALWTEAREQALCGPGLRKTKYRSFRRRLLKFIPGLNRSLEEEESQL.

Residues 1–52 (MTLRRLRKLQQKEEAAATPDPAARTPDSEVAPAAPVPTPGPPAAAATPGPPA) form a disordered region. Positions 16 to 33 (AATPDPAARTPDSEVAPA) are enriched in low complexity. Thr77 is modified (phosphothreonine). Ser94 carries the post-translational modification Phosphoserine. The PDZ domain maps to 101-190 (VLTLEKEDNQ…VLRLETLYGT (90 aa)). Residues 181–258 (VLRLETLYGT…GAGLLPGSLP (78 aa)) are interaction with PSCD3. Residue Tyr237 is modified to Phosphotyrosine. Arg270 bears the Omega-N-methylarginine mark. The segment at 293-349 (SEPPALPPPPPPARAFGPGPAETPAVGPGPGPRAALSRSASVRCAGPGGGGGGGAPG) is disordered. Over residues 296 to 305 (PALPPPPPPA) the composition is skewed to pro residues. Residues 338–348 (GPGGGGGGGAP) are compositionally biased toward gly residues. Residue Ser387 is modified to Phosphoserine.

In terms of assembly, heteromer. Composed of TAMALIN, CYTH2 and at least one GRM1. Also interacts with CYTH3, GRM2, GRM3 and GRM5.

It localises to the cytoplasm. It is found in the perinuclear region. The protein localises to the cell membrane. The protein resides in the postsynaptic cell membrane. Plays a role in intracellular trafficking and contributes to the macromolecular organization of group 1 metabotropic glutamate receptors (mGluRs) at synapses. The sequence is that of Protein TAMALIN from Homo sapiens (Human).